A 687-amino-acid chain; its full sequence is Acetyl-coenzyme A synthetase 2 (687 aa).

CoA-binding positions include 206-209 (RGGK) and Thr-325. ATP-binding positions include 401-403 (GEP), 425-430 (DTMWQT), Asp-516, and Arg-531. Position 539 (Ser-539) interacts with CoA. ATP is bound at residue Arg-542. Arg-617 contacts CoA.

Belongs to the ATP-dependent AMP-binding enzyme family.

It carries out the reaction acetate + ATP + CoA = acetyl-CoA + AMP + diphosphate. The protein is Acetyl-coenzyme A synthetase 2 (ACS2) of Eremothecium gossypii (strain ATCC 10895 / CBS 109.51 / FGSC 9923 / NRRL Y-1056) (Yeast).